Reading from the N-terminus, the 98-residue chain is snRNA-activating protein complex subunit 5 (98 aa).

Residues 73 to 82 (QTTLELSTKS) show a composition bias toward polar residues. Residues 73–98 (QTTLELSTKSHVTEEEEEEEEEESDS) are disordered. Thr-85 is subject to Phosphothreonine. Positions 86–98 (EEEEEEEEEESDS) are enriched in acidic residues.

In terms of assembly, part of the SNAPc complex composed of 5 subunits: SNAPC1, SNAPC2, SNAPC3, SNAPC4 and SNAPC5. SNAPC5 interacts with SNAPC4.

The protein resides in the nucleus. Functionally, part of the SNAPc complex required for the transcription of both RNA polymerase II and III small-nuclear RNA genes. Binds to the proximal sequence element (PSE), a non-TATA-box basal promoter element common to these 2 types of genes. Recruits TBP and BRF2 to the U6 snRNA TATA box. This Homo sapiens (Human) protein is snRNA-activating protein complex subunit 5 (SNAPC5).